Here is a 298-residue protein sequence, read N- to C-terminus: 3-hydroxyisobutyrate dehydrogenase (298 aa).

Residues 2 to 30, 65 to 66, and threonine 96 contribute to the NAD(+) site; these read TDIA…VNVF and LP. Residue lysine 171 is part of the active site. Residue lysine 246 participates in NAD(+) binding.

It belongs to the HIBADH-related family.

It carries out the reaction 3-hydroxy-2-methylpropanoate + NAD(+) = 2-methyl-3-oxopropanoate + NADH + H(+). It participates in amino-acid degradation; L-valine degradation. The sequence is that of 3-hydroxyisobutyrate dehydrogenase from Pseudomonas aeruginosa (strain ATCC 15692 / DSM 22644 / CIP 104116 / JCM 14847 / LMG 12228 / 1C / PRS 101 / PAO1).